Consider the following 604-residue polypeptide: Elongation factor 4 (604 aa).

The 182-residue stretch at 10–191 folds into the tr-type G domain; that stretch reads KNIRNFSIIA…KIITTIPAPS (182 aa). GTP-binding positions include 22 to 27 and 138 to 141; these read DHGKST and NKID.

Belongs to the TRAFAC class translation factor GTPase superfamily. Classic translation factor GTPase family. LepA subfamily.

It localises to the cell inner membrane. The catalysed reaction is GTP + H2O = GDP + phosphate + H(+). Required for accurate and efficient protein synthesis under certain stress conditions. May act as a fidelity factor of the translation reaction, by catalyzing a one-codon backward translocation of tRNAs on improperly translocated ribosomes. Back-translocation proceeds from a post-translocation (POST) complex to a pre-translocation (PRE) complex, thus giving elongation factor G a second chance to translocate the tRNAs correctly. Binds to ribosomes in a GTP-dependent manner. This Helicobacter pylori (strain P12) protein is Elongation factor 4.